A 357-amino-acid polypeptide reads, in one-letter code: UDP-N-acetylglucosamine--N-acetylmuramyl-(pentapeptide) pyrophosphoryl-undecaprenol N-acetylglucosamine transferase (357 aa).

Residues T10–G12, N124, S189, I244, and Q289 contribute to the UDP-N-acetyl-alpha-D-glucosamine site.

It belongs to the glycosyltransferase 28 family. MurG subfamily.

Its subcellular location is the cell membrane. The catalysed reaction is Mur2Ac(oyl-L-Ala-gamma-D-Glu-L-Lys-D-Ala-D-Ala)-di-trans,octa-cis-undecaprenyl diphosphate + UDP-N-acetyl-alpha-D-glucosamine = beta-D-GlcNAc-(1-&gt;4)-Mur2Ac(oyl-L-Ala-gamma-D-Glu-L-Lys-D-Ala-D-Ala)-di-trans,octa-cis-undecaprenyl diphosphate + UDP + H(+). It functions in the pathway cell wall biogenesis; peptidoglycan biosynthesis. Functionally, cell wall formation. Catalyzes the transfer of a GlcNAc subunit on undecaprenyl-pyrophosphoryl-MurNAc-pentapeptide (lipid intermediate I) to form undecaprenyl-pyrophosphoryl-MurNAc-(pentapeptide)GlcNAc (lipid intermediate II). The polypeptide is UDP-N-acetylglucosamine--N-acetylmuramyl-(pentapeptide) pyrophosphoryl-undecaprenol N-acetylglucosamine transferase (Lactococcus lactis subsp. lactis (strain IL1403) (Streptococcus lactis)).